The chain runs to 577 residues: F-box-like/WD repeat-containing protein TBL1X (577 aa).

Residues 55-87 form the LisH domain; that stretch reads TSDEVNFLVYRYLQESGFSHSAFTFGIESHISQ. The region spanning 92–137 is the F-box-like domain; it reads GTLVPPAALISILQKGLQYVEAEISINEDGTVFDGRPIESLSLIDA. Residue Lys153 is modified to N6-acetyllysine. The disordered stretch occupies residues 177 to 202; the sequence is TTSAGVSHQNPSKNREATVNGEENRA. Ser183 bears the Phosphoserine mark. WD repeat units follow at residues 230–269, 286–325, 327–366, 369–409, 410–449, 452–500, 503–542, and 544–576; these read GHES…NGGS, PSNK…ASTL, QHKG…AKQQ, FHSA…KTFQ, GHTN…CIHD, AHNK…CTHT, KHQE…LVHS, and RGTG…LDLR. Lys340 participates in a covalent cross-link: Glycyl lysine isopeptide (Lys-Gly) (interchain with G-Cter in SUMO2).

The protein belongs to the WD repeat EBI family. Homotetramer; dimer of dimers. Component of the N-Cor repressor complex, at least composed of NCOR1, NCOR2, HDAC3, TBL1X, TBL1R, CORO2A and GPS2. Interacts with GPS2 (when sumoylated); leading to protect GPS2 against degradation by the proteasome. Component of a E3 ubiquitin ligase complex containing UBE2D1, SIAH1, CACYBP/SIP, SKP1, APC and TBL1X. Probably part of other corepressor complexes, that do not contain NCOR1 and NCOR2. Interacts with histones H2B, H3a and H4. Interacts with MECP2; recruits TBL1X to the heterochromatin foci. Interacts with USP44. As to expression, ubiquitous.

The protein localises to the nucleus. In terms of biological role, F-box-like protein involved in the recruitment of the ubiquitin/19S proteasome complex to nuclear receptor-regulated transcription units. Plays an essential role in transcription activation mediated by nuclear receptors. Probably acts as integral component of corepressor complexes that mediates the recruitment of the 19S proteasome complex, leading to the subsequent proteasomal degradation of transcription repressor complexes, thereby allowing cofactor exchange. This Homo sapiens (Human) protein is F-box-like/WD repeat-containing protein TBL1X (TBL1X).